The following is a 507-amino-acid chain: ATP synthase subunit alpha, chloroplastic (507 aa).

An ATP-binding site is contributed by 170–177 (GDRQTGKT).

It belongs to the ATPase alpha/beta chains family. As to quaternary structure, F-type ATPases have 2 components, CF(1) - the catalytic core - and CF(0) - the membrane proton channel. CF(1) has five subunits: alpha(3), beta(3), gamma(1), delta(1), epsilon(1). CF(0) has four main subunits: a, b, b' and c.

The protein localises to the plastid. Its subcellular location is the chloroplast thylakoid membrane. It catalyses the reaction ATP + H2O + 4 H(+)(in) = ADP + phosphate + 5 H(+)(out). Functionally, produces ATP from ADP in the presence of a proton gradient across the membrane. The alpha chain is a regulatory subunit. The chain is ATP synthase subunit alpha, chloroplastic from Gossypium hirsutum (Upland cotton).